A 251-amino-acid chain; its full sequence is Uridylate kinase (251 aa).

11–14 contributes to the ATP binding site; it reads KLSG. The tract at residues 19 to 24 is involved in allosteric activation by GTP; it reads GNQGFG. G53 is a UMP binding site. ATP contacts are provided by G54 and R58. Residues D73 and 134–141 contribute to the UMP site; that span reads TGNPYFTT. The ATP site is built by T161, Y167, and D170.

It belongs to the UMP kinase family. Homohexamer.

The protein localises to the cytoplasm. The enzyme catalyses UMP + ATP = UDP + ADP. Its pathway is pyrimidine metabolism; CTP biosynthesis via de novo pathway; UDP from UMP (UMPK route): step 1/1. With respect to regulation, allosterically activated by GTP. Inhibited by UTP. Its function is as follows. Catalyzes the reversible phosphorylation of UMP to UDP. The sequence is that of Uridylate kinase from Protochlamydia amoebophila (strain UWE25).